The chain runs to 988 residues: UPF0182 protein MAB_3498c (988 aa).

7 consecutive transmembrane segments (helical) span residues 19 to 39, 63 to 83, 114 to 134, 176 to 196, 211 to 231, 260 to 280, and 288 to 308; these read LVAASLVIVVLLLIGPRLVDT, LALFLIVGTLVAAVVFAGFGL, LFLIGVPILIGVLAGVVAQSY, FIAASIALIVNGLVHYIFGGI, IQLITFAGILVLLKVAAYWLD, KLILLAIAVICAVAVFSALVL, and IGLALLLLSSLVVGAGWPLIV.

It belongs to the UPF0182 family.

It localises to the cell membrane. The polypeptide is UPF0182 protein MAB_3498c (Mycobacteroides abscessus (strain ATCC 19977 / DSM 44196 / CCUG 20993 / CIP 104536 / JCM 13569 / NCTC 13031 / TMC 1543 / L948) (Mycobacterium abscessus)).